The sequence spans 331 residues: Probable cytosolic iron-sulfur protein assembly protein Ciao1 (331 aa).

WD repeat units lie at residues Gly-12 to Lys-51, Gly-57 to Glu-96, Gly-97 to Cys-136, Ala-142 to Asp-181, Ser-188 to Gly-227, Glu-246 to Ala-285, and Ala-297 to Glu-331.

This sequence belongs to the WD repeat CIA1 family.

Its function is as follows. Essential component of the cytosolic iron-sulfur (Fe/S) protein assembly machinery. Required for the maturation of extramitochondrial Fe/S proteins. This Drosophila virilis (Fruit fly) protein is Probable cytosolic iron-sulfur protein assembly protein Ciao1.